We begin with the raw amino-acid sequence, 66 residues long: DNA-binding protein 7d (66 aa).

2 positions are modified to N6-methyllysine; partial: Lys5 and Lys7.

The protein belongs to the 7 kDa DNA-binding/endoribonuclease P2 family. In terms of assembly, monomer. In terms of processing, lys-5 was 70% monomethylated in form 7a, 25% in form 7b, and 20% in form 7d. Lys-7 was 50% monomethylated in form 7a, 40% in form 7b, and 50% in form 7d.

It is found in the cytoplasm. In terms of biological role, can constrain negative DNA supercoils. May be involved in maintaining the integrity of the genome at high temperature. The polypeptide is DNA-binding protein 7d (Sulfolobus acidocaldarius (strain ATCC 33909 / DSM 639 / JCM 8929 / NBRC 15157 / NCIMB 11770)).